The sequence spans 21 residues: Major outer membrane protein (21 aa).

Disulfide bond interactions within and between MOMP molecules and other components form high molecular-weight oligomers.

The protein resides in the cell outer membrane. In terms of biological role, structural rigidity of the outer membrane of elementary bodies and porin forming, permitting diffusion of solutes through the intracellular reticulate body membrane. This chain is Major outer membrane protein, found in Actinobacillus equuli.